The following is a 432-amino-acid chain: Alkaline protease secretion protein AprE (432 aa).

The Cytoplasmic portion of the chain corresponds to 1–14 (MTRTVKRDENAYAR). The helical transmembrane segment at 15 to 36 (LGWLLVLFGFGGALLWAAFAPL) threads the bilayer. The Periplasmic portion of the chain corresponds to 37–432 (DQGVAVPATV…DRAHVALAEN (396 aa)).

This sequence belongs to the membrane fusion protein (MFP) (TC 8.A.1) family.

It localises to the cell inner membrane. Its function is as follows. Involved in the secretion of alkaline protease. This Pseudomonas aeruginosa (strain ATCC 15692 / DSM 22644 / CIP 104116 / JCM 14847 / LMG 12228 / 1C / PRS 101 / PAO1) protein is Alkaline protease secretion protein AprE (aprE).